A 229-amino-acid chain; its full sequence is 3-dehydroquinate dehydratase (229 aa).

3-dehydroquinate-binding positions include 29 to 31 (ELR) and arginine 56. The active-site Proton donor/acceptor is the histidine 120. The active-site Schiff-base intermediate with substrate is lysine 146. 3-dehydroquinate-binding residues include arginine 187, threonine 208, and glutamine 212.

This sequence belongs to the type-I 3-dehydroquinase family. Homodimer.

The catalysed reaction is 3-dehydroquinate = 3-dehydroshikimate + H2O. Its pathway is metabolic intermediate biosynthesis; chorismate biosynthesis; chorismate from D-erythrose 4-phosphate and phosphoenolpyruvate: step 3/7. Involved in the third step of the chorismate pathway, which leads to the biosynthesis of aromatic amino acids. Catalyzes the cis-dehydration of 3-dehydroquinate (DHQ) and introduces the first double bond of the aromatic ring to yield 3-dehydroshikimate. The sequence is that of 3-dehydroquinate dehydratase from Haloarcula marismortui (strain ATCC 43049 / DSM 3752 / JCM 8966 / VKM B-1809) (Halobacterium marismortui).